Consider the following 1190-residue polypeptide: Phosphatidylinositol 3,4,5-trisphosphate 5-phosphatase 1 (1190 aa).

The 97-residue stretch at 8-104 (WNHGNITRSK…GLVTHLQFPV (97 aa)) folds into the SH2 domain. Over residues 111-120 (AIDEPEEDTE) the composition is skewed to acidic residues. The segment at 111–130 (AIDEPEEDTESVMSPPELPP) is disordered. The short motif at 126–131 (PELPPR) is the SH3-binding 1 element. Phosphoserine is present on serine 245. An NPXY motif 1 motif is present at residues 914–917 (NPNY). Tyrosine 917 is modified (phosphotyrosine). Serine 934 carries the phosphoserine modification. Tyrosine 944 is subject to Phosphotyrosine. A disordered region spans residues 946–1190 (QLPKDSSLGP…ESLLGRTAMQ (245 aa)). Residues 961 to 971 (PPTPPSQPPLS) are compositionally biased toward pro residues. Phosphothreonine is present on threonine 963. Serine 966 and serine 971 each carry phosphoserine. The SH3-binding 2 motif lies at 969–974 (PLSPKK). Residues 989–998 (QETRPGDLGK) show a composition bias toward basic and acidic residues. The segment at 1014-1028 (MFENPLYGSVSPFPK) is interaction with DAB2. Residues 1017–1020 (NPLY) carry the NPXY motif 2 motif. A Phosphotyrosine modification is found at tyrosine 1020. Over residues 1031 to 1045 (PRKEQESPKMMRKEP) the composition is skewed to basic and acidic residues. An SH3-binding 3 motif is present at residues 1038-1049 (PKMMRKEPPPCP). Over residues 1140–1149 (IPAPRPPLPV) the composition is skewed to pro residues. Positions 1161-1183 (KGRDYRDNTELPHHGKHRQEESL) are enriched in basic and acidic residues.

The protein belongs to the inositol 1,4,5-trisphosphate 5-phosphatase family. As to quaternary structure, interacts with tyrosine phosphorylated forms of SHC1. Interacts with tyrosine phosphorylated form of DOK1. Interacts with tyrosine phosphorylated form of DOK3. Interacts with tyrosine phosphorylated form of SLAMF1/CD150. Interacts with PTPN11/SHP-2 in response to IL-3. Interacts with receptor EPOR. Interacts with receptors MS4A2/FCER1B and FCER1G. Interacts with receptors FCGR2B and FCGR3. Interacts with receptor FCGR2A, leading to regulate gene expression during the phagocytic process. Interacts with GRB2. Interacts with PLCG1. Interacts with tyrosine kinases SRC and TEC. Interacts with c-Met/MET. Interacts with MILR1 (tyrosine-phosphorylated). Can weakly interact (via NPXY motif 2) with DAB2 (via PID domain); the interaction is impaired by tyrosine phosphorylation of the NPXY motif. Interacts (via SH2 domain) with tyrosine phosphorylated KLRC1 (via ITIM). Interacts with MPL/TPOR. Post-translationally, tyrosine phosphorylated by the members of the SRC family after exposure to a diverse array of extracellular stimuli such as cytokines, growth factors, antibodies, chemokines, integrin ligands and hypertonic and oxidative stress. Phosphorylated upon IgG receptor FCGR2B-binding.

The protein localises to the cytoplasm. The protein resides in the cell membrane. It localises to the membrane raft. It is found in the cytoskeleton. It catalyses the reaction a 1,2-diacyl-sn-glycero-3-phospho-(1D-myo-inositol-3,4,5-trisphosphate) + H2O = a 1,2-diacyl-sn-glycero-3-phospho-(1D-myo-inositol-3,4-bisphosphate) + phosphate. The catalysed reaction is 1D-myo-inositol 1,3,4,5-tetrakisphosphate + H2O = 1D-myo-inositol 1,3,4-trisphosphate + phosphate. It carries out the reaction a 1,2-diacyl-sn-glycero-3-phospho-(1D-myo-inositol-4,5-bisphosphate) + H2O = a 1,2-diacyl-sn-glycero-3-phospho-(1D-myo-inositol 4-phosphate) + phosphate. With respect to regulation, activated upon translocation to the sites of synthesis of PtdIns(3,4,5)P3 in the membrane. Functionally, phosphatidylinositol (PtdIns) phosphatase that specifically hydrolyzes the 5-phosphate of phosphatidylinositol-3,4,5-trisphosphate (PtdIns(3,4,5)P3) to produce PtdIns(3,4)P2, thereby negatively regulating the PI3K (phosphoinositide 3-kinase) pathways. Also able to hydrolyze the 5-phosphate of phosphatidylinositol-4,5-bisphosphate (PtdIns(4,5)P3) and inositol 1,3,4,5-tetrakisphosphate. Acts as a negative regulator of B-cell antigen receptor signaling. Mediates signaling from the FC-gamma-RIIB receptor (FCGR2B), playing a central role in terminating signal transduction from activating immune/hematopoietic cell receptor systems. Acts as a negative regulator of myeloid cell proliferation/survival and chemotaxis, mast cell degranulation, immune cells homeostasis, integrin alpha-IIb/beta-3 signaling in platelets and JNK signaling in B-cells. Regulates proliferation of osteoclast precursors, macrophage programming, phagocytosis and activation and is required for endotoxin tolerance. Involved in the control of cell-cell junctions, CD32a signaling in neutrophils and modulation of EGF-induced phospholipase C activity. Key regulator of neutrophil migration, by governing the formation of the leading edge and polarization required for chemotaxis. Modulates FCGR3/CD16-mediated cytotoxicity in NK cells. Mediates the activin/TGF-beta-induced apoptosis through its Smad-dependent expression. The sequence is that of Phosphatidylinositol 3,4,5-trisphosphate 5-phosphatase 1 (Inpp5d) from Rattus norvegicus (Rat).